Reading from the N-terminus, the 198-residue chain is Probable nicotinate-nucleotide adenylyltransferase (198 aa).

It belongs to the NadD family.

It carries out the reaction nicotinate beta-D-ribonucleotide + ATP + H(+) = deamido-NAD(+) + diphosphate. Its pathway is cofactor biosynthesis; NAD(+) biosynthesis; deamido-NAD(+) from nicotinate D-ribonucleotide: step 1/1. In terms of biological role, catalyzes the reversible adenylation of nicotinate mononucleotide (NaMN) to nicotinic acid adenine dinucleotide (NaAD). The chain is Probable nicotinate-nucleotide adenylyltransferase from Chlorobium limicola (strain DSM 245 / NBRC 103803 / 6330).